Here is an 86-residue protein sequence, read N- to C-terminus: Co-chaperonin GroES (86 aa).

It belongs to the GroES chaperonin family. As to quaternary structure, heptamer of 7 subunits arranged in a ring. Interacts with the chaperonin GroEL.

Its subcellular location is the cytoplasm. Functionally, together with the chaperonin GroEL, plays an essential role in assisting protein folding. The GroEL-GroES system forms a nano-cage that allows encapsulation of the non-native substrate proteins and provides a physical environment optimized to promote and accelerate protein folding. GroES binds to the apical surface of the GroEL ring, thereby capping the opening of the GroEL channel. This is Co-chaperonin GroES from Campylobacter jejuni subsp. jejuni serotype O:6 (strain 81116 / NCTC 11828).